A 146-amino-acid polypeptide reads, in one-letter code: Large ribosomal subunit protein uL15 (146 aa).

The segment at 1–54 is disordered; the sequence is MTLRLNELAPAEGAKREHRRLGRGIGSGVGKTGGRGIKGQKSRKSGGVRPGFEG. Over residues 23–37 the composition is skewed to gly residues; sequence RGIGSGVGKTGGRGI.

The protein belongs to the universal ribosomal protein uL15 family. In terms of assembly, part of the 50S ribosomal subunit.

In terms of biological role, binds to the 23S rRNA. This chain is Large ribosomal subunit protein uL15, found in Acinetobacter baumannii (strain SDF).